The sequence spans 177 residues: Cytoglobin-1 (177 aa).

The Globin domain maps to 16–165 (PLTDKERVMI…LCCSIKAVYE (150 aa)). The heme b site is built by H79 and H111.

The protein belongs to the globin family. As to quaternary structure, monomeric.

It is found in the cytoplasm. The protein resides in the nucleus. The enzyme catalyses Fe(II)-heme b-[protein] + nitric oxide + O2 = Fe(III)-heme b-[protein] + nitrate. The catalysed reaction is Fe(III)-heme b-[protein] + nitric oxide + H2O = Fe(II)-heme b-[protein] + nitrite + 2 H(+). It catalyses the reaction 2 superoxide + 2 H(+) = H2O2 + O2. It carries out the reaction H2O2 + AH2 = A + 2 H2O. Its function is as follows. Probable multifunctional globin with a hexacoordinated heme iron required for the catalysis of various reactions depending on redox condition of the cell as well as oxygen availability. Has a nitric oxide dioxygenase (NOD) activity and is most probably involved in cell-mediated and oxygen-dependent nitric oxide consumption. Under normoxic conditions functions as a nitric oxide dioxygenase (NOD) but under hypoxic conditions the globin may switch its function to that of a nitrite (NO2) reductase (NiR), generating nitric oxide. Could also have peroxidase and superoxide dismutase activities, detoxifying reactive oxygen species and protecting cells against oxidative stress. Also binds dioxygen with low affinity and could function as an oxygen sensor but has probably no function as a respiratory oxygen carrier. The sequence is that of Cytoglobin-1 from Oryzias latipes (Japanese rice fish).